Reading from the N-terminus, the 800-residue chain is DNA topoisomerase 4 subunit A (800 aa).

Positions 31-495 (LPDVRDGLKP…EIEEIKIDKE (465 aa)) constitute a Topo IIA-type catalytic domain. The active-site O-(5'-phospho-DNA)-tyrosine intermediate is the Y119.

The protein belongs to the type II topoisomerase GyrA/ParC subunit family. ParC type 2 subfamily. As to quaternary structure, heterotetramer composed of ParC and ParE.

Its subcellular location is the cell membrane. It catalyses the reaction ATP-dependent breakage, passage and rejoining of double-stranded DNA.. In terms of biological role, topoisomerase IV is essential for chromosome segregation. It relaxes supercoiled DNA. Performs the decatenation events required during the replication of a circular DNA molecule. This is DNA topoisomerase 4 subunit A from Staphylococcus aureus.